Here is a 383-residue protein sequence, read N- to C-terminus: Acetylornithine deacetylase (383 aa).

His80 contributes to the Zn(2+) binding site. Residue Asp82 is part of the active site. Asp112 is a binding site for Zn(2+). Residue Glu144 is part of the active site. Zn(2+) is bound by residues Glu145, Glu169, and His355.

It belongs to the peptidase M20A family. ArgE subfamily. As to quaternary structure, homodimer. Requires Zn(2+) as cofactor. It depends on Co(2+) as a cofactor. The cofactor is glutathione.

Its subcellular location is the cytoplasm. It carries out the reaction N(2)-acetyl-L-ornithine + H2O = L-ornithine + acetate. The protein operates within amino-acid biosynthesis; L-arginine biosynthesis; L-ornithine from N(2)-acetyl-L-ornithine (linear): step 1/1. In terms of biological role, catalyzes the hydrolysis of the amide bond of N(2)-acetylated L-amino acids. Cleaves the acetyl group from N-acetyl-L-ornithine to form L-ornithine, an intermediate in L-arginine biosynthesis pathway, and a branchpoint in the synthesis of polyamines. This Shigella boydii serotype 18 (strain CDC 3083-94 / BS512) protein is Acetylornithine deacetylase.